Consider the following 77-residue polypeptide: uncharacterized protein (77 aa).

The HTH cro/C1-type domain occupies 13-67 (VLQYMVNNDYSLNQLALEIGVSPATLSRVLNGERRPGQLVIGKMLHYFNLKFEDL). Positions 24-43 (LNQLALEIGVSPATLSRVLN) form a DNA-binding region, H-T-H motif.

The protein localises to the cytoplasm. This is an uncharacterized protein from Bacillus subtilis (strain 168).